The following is a 147-amino-acid chain: Cytochrome b-c1 complex subunit 6, mitochondrial (147 aa).

Residues 25-89 (AEDDDNEQHE…DLREHFKNTE (65 aa)) are disordered. The span at 41–78 (EEKEEENGDEDEDEDEDEDDDDDDDEDEEEEEEVTDQL) shows a compositional bias: acidic residues. Basic and acidic residues predominate over residues 79-89 (EDLREHFKNTE). The cysteines at positions 101 and 123 are disulfide-linked.

This sequence belongs to the UQCRH/QCR6 family. In terms of assembly, component of the ubiquinol-cytochrome c oxidoreductase (cytochrome b-c1 complex, complex III, CIII), a multisubunit enzyme composed of 10 subunits. The complex is composed of 3 respiratory subunits cytochrome b (COB), cytochrome c1 (CYT1) and Rieske protein (RIP1), 2 core protein subunits COR1 and QCR2, and 5 low-molecular weight protein subunits QCR6, QCR7, QCR8, QCR9 and QCR10. The complex exists as an obligatory dimer and forms supercomplexes (SCs) in the inner mitochondrial membrane with a monomer or a dimer of cytochrome c oxidase (complex IV, CIV), resulting in 2 different assemblies (supercomplexes III(2)IV and III(2)IV(2)). QCR6 interacts with COX5A at the CIII-CIV interface.

Its subcellular location is the mitochondrion inner membrane. In terms of biological role, component of the ubiquinol-cytochrome c oxidoreductase, a multisubunit transmembrane complex that is part of the mitochondrial electron transport chain which drives oxidative phosphorylation. The respiratory chain contains 3 multisubunit complexes succinate dehydrogenase (complex II, CII), ubiquinol-cytochrome c oxidoreductase (cytochrome b-c1 complex, complex III, CIII) and cytochrome c oxidase (complex IV, CIV), that cooperate to transfer electrons derived from NADH and succinate to molecular oxygen, creating an electrochemical gradient over the inner membrane that drives transmembrane transport and the ATP synthase. The cytochrome b-c1 complex catalyzes electron transfer from ubiquinol to cytochrome c, linking this redox reaction to translocation of protons across the mitochondrial inner membrane, with protons being carried across the membrane as hydrogens on the quinol. In the process called Q cycle, 2 protons are consumed from the matrix, 4 protons are released into the intermembrane space and 2 electrons are passed to cytochrome c. This Saccharomyces cerevisiae (strain ATCC 204508 / S288c) (Baker's yeast) protein is Cytochrome b-c1 complex subunit 6, mitochondrial (QCR6).